Here is a 440-residue protein sequence, read N- to C-terminus: Putative epoxide hydrolase (440 aa).

The segment at 1–21 (MTKTLAEQPGEGAAPVSPSPS) is disordered. The tat-type signal signal peptide spans 1-49 (MTKTLAEQPGEGAAPVSPSPSRRALLHGAAGLGALAAGAAVAGPGLAFA).

The protein belongs to the peptidase S33 family. In terms of processing, predicted to be exported by the Tat system. The position of the signal peptide cleavage has not been experimentally proven.

It carries out the reaction an epoxide + H2O = an ethanediol. In Stigmatella aurantiaca (strain DW4/3-1), this protein is Putative epoxide hydrolase.